The primary structure comprises 151 residues: MQFTSLLLAVIFLISLVSIDGLLRRCYQCRSRGELGSCKDPFTFNATDVEQEPGVAAIPCASGWCGKVIEGGGTYAIDDYDLAIQRMCVQRGPDDNMDRCADTIYNYKKVYMCFCQGDLCNGARSWSSAPQMILITMLPLLGSWLLQRMRN.

The N-terminal stretch at 1 to 19 is a signal peptide; that stretch reads MQFTSLLLAVIFLISLVSI. Residues 20 to 125 lie on the Extracellular side of the membrane; sequence DGLLRRCYQC…QGDLCNGARS (106 aa). 5 disulfide bridges follow: cysteine 26–cysteine 65, cysteine 29–cysteine 38, cysteine 60–cysteine 88, cysteine 100–cysteine 113, and cysteine 115–cysteine 120. Residue asparagine 45 is glycosylated (N-linked (GlcNAc...) asparagine). Asparagine 121 is lipidated: GPI-anchor amidated asparagine. The propeptide at 122-151 is removed in mature form; that stretch reads GARSWSSAPQMILITMLPLLGSWLLQRMRN. Residues 126-146 form a helical membrane-spanning segment; it reads WSSAPQMILITMLPLLGSWLL. Topologically, residues 147–151 are cytoplasmic; sequence QRMRN.

The protein belongs to the quiver family.

It is found in the cell membrane. In terms of biological role, required for chitin fiber assembly and organization involved in cuticle formation and tracheal development. This is UPAR/Ly6 domain-containing protein rtv from Drosophila melanogaster (Fruit fly).